Consider the following 412-residue polypeptide: Probable histone-binding protein rba-1 (412 aa).

WD repeat units lie at residues 117–157 (NHPG…SEPK), 169–209 (GHEG…TISG), 219–259 (GHSS…PQLT), 262–302 (GHTA…KKMY), 306–346 (HHND…DPSS), and 365–405 (GHTG…VSSE).

It belongs to the WD repeat RBAP46/RBAP48/MSI1 family. Binds directly to helix 1 of the histone fold of histone H4, a region that is not accessible when H4 is in chromatin. Interacts with zft-11; the interaction is required to suppress the activation of non-neuronal genes in neurons.

Its subcellular location is the nucleus. Its function is as follows. Core histone-binding subunit that may target chromatin assembly factors, chromatin remodeling factors and histone deacetylases to their histone substrates in a manner that is regulated by nucleosomal DNA. Plays a role in regulating cell cycle progression. Required to repress the induction of vulval development by Ras signaling. In association with the zinc finger protein ztf-11, negatively regulates the expression of non-neuronal genes during neurogenesis. The polypeptide is Probable histone-binding protein rba-1 (Caenorhabditis elegans).